Consider the following 196-residue polypeptide: Imidazoleglycerol-phosphate dehydratase (196 aa).

It belongs to the imidazoleglycerol-phosphate dehydratase family.

The protein localises to the cytoplasm. It catalyses the reaction D-erythro-1-(imidazol-4-yl)glycerol 3-phosphate = 3-(imidazol-4-yl)-2-oxopropyl phosphate + H2O. The protein operates within amino-acid biosynthesis; L-histidine biosynthesis; L-histidine from 5-phospho-alpha-D-ribose 1-diphosphate: step 6/9. The chain is Imidazoleglycerol-phosphate dehydratase from Caulobacter vibrioides (strain ATCC 19089 / CIP 103742 / CB 15) (Caulobacter crescentus).